The chain runs to 352 residues: 3-isopropylmalate dehydrogenase (352 aa).

76–89 lines the NAD(+) pocket; sequence GPKWENLPHEHKPE. Substrate contacts are provided by Arg-96, Arg-106, Arg-134, and Asp-219. Residues Asp-219, Asp-243, and Asp-247 each coordinate Mg(2+). 276–288 contacts NAD(+); that stretch reads GSAPDIAGQNKAN.

The protein belongs to the isocitrate and isopropylmalate dehydrogenases family. LeuB type 1 subfamily. Homodimer. The cofactor is Mg(2+). Requires Mn(2+) as cofactor.

It is found in the cytoplasm. The catalysed reaction is (2R,3S)-3-isopropylmalate + NAD(+) = 4-methyl-2-oxopentanoate + CO2 + NADH. It participates in amino-acid biosynthesis; L-leucine biosynthesis; L-leucine from 3-methyl-2-oxobutanoate: step 3/4. Its function is as follows. Catalyzes the oxidation of 3-carboxy-2-hydroxy-4-methylpentanoate (3-isopropylmalate) to 3-carboxy-4-methyl-2-oxopentanoate. The product decarboxylates to 4-methyl-2 oxopentanoate. The chain is 3-isopropylmalate dehydrogenase from Chlorobium chlorochromatii (strain CaD3).